The following is a 141-amino-acid chain: Oleosin L (141 aa).

A run of 3 helical transmembrane segments spans residues 23 to 43 (VLFFVVMGGGVLASLSALALA), 46 to 66 (VVLMLILTPVFLLLSPVILPV), and 74 to 94 (AAAFMAAVTIGIAGAAALIWV). The short motif at 54-65 (PVFLLLSPVILP) is the Proline-knot element.

It belongs to the oleosin family. In terms of tissue distribution, expressed in megagametophytes (at protein level).

The protein resides in the lipid droplet. It localises to the membrane. This Pinus massoniana (Chinese red pine) protein is Oleosin L.